We begin with the raw amino-acid sequence, 332 residues long: UDP-N-acetylenolpyruvoylglucosamine reductase (332 aa).

The region spanning 15-184 (IDVSAACFLE…TYVSFRLSKR (170 aa)) is the FAD-binding PCMH-type domain. Residue R160 is part of the active site. The active-site Proton donor is S232. Residue E328 is part of the active site.

This sequence belongs to the MurB family. Requires FAD as cofactor.

It localises to the cytoplasm. It catalyses the reaction UDP-N-acetyl-alpha-D-muramate + NADP(+) = UDP-N-acetyl-3-O-(1-carboxyvinyl)-alpha-D-glucosamine + NADPH + H(+). The protein operates within cell wall biogenesis; peptidoglycan biosynthesis. Cell wall formation. This is UDP-N-acetylenolpyruvoylglucosamine reductase from Bacteroides fragilis (strain ATCC 25285 / DSM 2151 / CCUG 4856 / JCM 11019 / LMG 10263 / NCTC 9343 / Onslow / VPI 2553 / EN-2).